The primary structure comprises 392 residues: THO complex subunit MFT1 (392 aa).

2 stretches are compositionally biased toward acidic residues: residues 258 to 271 and 290 to 330; these read DNIDEDYESDEDEE and NVDE…EVDG. The interval 258 to 392 is disordered; that stretch reads DNIDEDYESD…SASSSVEEVK (135 aa). Residue serine 266 is modified to Phosphoserine. The span at 331-344 shows a compositional bias: polar residues; the sequence is ESSQQEDNSRQGNN. Positions 345–367 are enriched in acidic residues; the sequence is EETDKETGVIEEPDAVNDAEEAD. The segment covering 377–392 has biased composition (polar residues); that stretch reads GTTSDFSASSSVEEVK.

In terms of assembly, component of the THO complex, which is composed of HPR1, MFT1, THO2 and THP2. Together with SUB2, TEX1 and YRA1, THO forms the transcription/export (TREX) complex. THO associates with DNA and RNA in vitro.

The protein resides in the nucleus. Functionally, component the THO subcomplex of the TREX complex, which operates in coupling transcription elongation to mRNA export. The THO complex is recruited to transcribed genes and moves along the gene with the elongating polymerase during transcription. THO is important for stabilizing nascent RNA in the RNA polymerase II elongation complex by preventing formation of DNA:RNA hybrids behind the elongating polymerase. It functions in cotranscriptional formation of an export-competent messenger ribonucleoprotein particle (mRNP) by facilitating the loading of ATP-dependent RNA helicase SUB2 and the mRNA export factor YRA1 along the nascent mRNA. The sequence is that of THO complex subunit MFT1 (MFT1) from Saccharomyces cerevisiae (strain ATCC 204508 / S288c) (Baker's yeast).